Reading from the N-terminus, the 1427-residue chain is DNA-directed RNA polymerase subunit beta' (1427 aa).

Positions 70, 72, 85, and 88 each coordinate Zn(2+). Mg(2+)-binding residues include D461, D463, and D465. C809, C882, C889, and C892 together coordinate Zn(2+). Residues 1394-1427 (EAAIGDDPLGKVQGEDFTTDDVMVEERPEGASEE) form a disordered region. A compositionally biased stretch (basic and acidic residues) spans 1417-1427 (VEERPEGASEE).

It belongs to the RNA polymerase beta' chain family. In terms of assembly, the RNAP catalytic core consists of 2 alpha, 1 beta, 1 beta' and 1 omega subunit. When a sigma factor is associated with the core the holoenzyme is formed, which can initiate transcription. Mg(2+) serves as cofactor. Zn(2+) is required as a cofactor.

The enzyme catalyses RNA(n) + a ribonucleoside 5'-triphosphate = RNA(n+1) + diphosphate. DNA-dependent RNA polymerase catalyzes the transcription of DNA into RNA using the four ribonucleoside triphosphates as substrates. This is DNA-directed RNA polymerase subunit beta' from Sphingopyxis alaskensis (strain DSM 13593 / LMG 18877 / RB2256) (Sphingomonas alaskensis).